The sequence spans 85 residues: ATP synthase subunit c (85 aa).

A run of 2 helical transmembrane segments spans residues 10–30 (GLAL…GAIG) and 65–85 (AVAE…LLVV).

It belongs to the ATPase C chain family. As to quaternary structure, F-type ATPases have 2 components, F(1) - the catalytic core - and F(0) - the membrane proton channel. F(1) has five subunits: alpha(3), beta(3), gamma(1), delta(1), epsilon(1). F(0) has three main subunits: a(1), b(2) and c(10-14). The alpha and beta chains form an alternating ring which encloses part of the gamma chain. F(1) is attached to F(0) by a central stalk formed by the gamma and epsilon chains, while a peripheral stalk is formed by the delta and b chains.

The protein resides in the cell inner membrane. F(1)F(0) ATP synthase produces ATP from ADP in the presence of a proton or sodium gradient. F-type ATPases consist of two structural domains, F(1) containing the extramembraneous catalytic core and F(0) containing the membrane proton channel, linked together by a central stalk and a peripheral stalk. During catalysis, ATP synthesis in the catalytic domain of F(1) is coupled via a rotary mechanism of the central stalk subunits to proton translocation. Functionally, key component of the F(0) channel; it plays a direct role in translocation across the membrane. A homomeric c-ring of between 10-14 subunits forms the central stalk rotor element with the F(1) delta and epsilon subunits. This chain is ATP synthase subunit c, found in Thermotoga maritima (strain ATCC 43589 / DSM 3109 / JCM 10099 / NBRC 100826 / MSB8).